A 200-amino-acid polypeptide reads, in one-letter code: Dephospho-CoA kinase (200 aa).

One can recognise a DPCK domain in the interval 3 to 200 (VLGLTGSIGM…LSGKPAAATR (198 aa)). ATP is bound at residue 11–16 (GMGKTT).

This sequence belongs to the CoaE family.

It localises to the cytoplasm. It carries out the reaction 3'-dephospho-CoA + ATP = ADP + CoA + H(+). The protein operates within cofactor biosynthesis; coenzyme A biosynthesis; CoA from (R)-pantothenate: step 5/5. Its function is as follows. Catalyzes the phosphorylation of the 3'-hydroxyl group of dephosphocoenzyme A to form coenzyme A. In Brucella abortus (strain 2308), this protein is Dephospho-CoA kinase.